The primary structure comprises 999 residues: Probable metabotropic glutamate receptor mgl-1 (999 aa).

Residues S202, 223–225, Y273, E363, and K455 contribute to the L-glutamate site; that span reads AST. N-linked (GlcNAc...) asparagine glycosylation occurs at N518. 7 helical membrane-spanning segments follow: residues 682–704, 719–739, 751–769, 792–812, 836–857, 871–893, and 904–929; these read SLVPTILAVFGIIATLFVIVVYV, LSYILLISMIMCYCMTFVLLS, TGIGFAFSCLYSAMFVKTN, VVMTAMLAGVQLIGSLIWLSV, HHFLYSLAYDGFLIVLCTTYAV, FIGFSMYTTCVVWLSWIFFFFGT, and LCISISMSANVALACIFSPKLWIILF. The tract at residues 975-999 is disordered; it reads DSTRRRSSRKTSQPTSTSSAHDTFL. The segment covering 984 to 993 has biased composition (low complexity); it reads KTSQPTSTSS.

Belongs to the G-protein coupled receptor 3 family.

Its subcellular location is the cell membrane. Functionally, G-protein coupled receptor for glutamate. Ligand binding causes a conformation change that triggers signaling via guanine nucleotide-binding proteins (G proteins) and modulates the activity of down-stream effectors. The chain is Probable metabotropic glutamate receptor mgl-1 (mgl-1) from Caenorhabditis elegans.